The chain runs to 159 residues: Dihydrofolate reductase (159 aa).

The 158-residue stretch at M1 to R158 folds into the DHFR domain. I5 serves as a coordination point for substrate. Residues A7 and V13 to A19 contribute to the NADP(+) site. A substrate-binding site is contributed by D27. L45–T46 serves as a coordination point for NADP(+). Substrate contacts are provided by R52 and R57. Residues S63–S64, K76, and G95–Q102 each bind NADP(+). T113 is a substrate binding site.

Belongs to the dihydrofolate reductase family.

It carries out the reaction (6S)-5,6,7,8-tetrahydrofolate + NADP(+) = 7,8-dihydrofolate + NADPH + H(+). Its pathway is cofactor biosynthesis; tetrahydrofolate biosynthesis; 5,6,7,8-tetrahydrofolate from 7,8-dihydrofolate: step 1/1. In terms of biological role, key enzyme in folate metabolism. Catalyzes an essential reaction for de novo glycine and purine synthesis, and for DNA precursor synthesis. The protein is Dihydrofolate reductase (folA) of Klebsiella aerogenes (Enterobacter aerogenes).